The chain runs to 304 residues: D-alanine--D-alanine ligase (304 aa).

The ATP-grasp domain occupies 100–301 (KLVALQSGIP…FGEFLEDLIK (202 aa)). An ATP-binding site is contributed by 129-184 (ERKLGSPFIVKPCDVGSTIGLSLVRSASEYEVALEEAFRFSDRLLLEEFIDGFEVT). Residues D256, E268, and N270 each coordinate Mg(2+).

This sequence belongs to the D-alanine--D-alanine ligase family. It depends on Mg(2+) as a cofactor. Mn(2+) is required as a cofactor.

It localises to the cytoplasm. The enzyme catalyses 2 D-alanine + ATP = D-alanyl-D-alanine + ADP + phosphate + H(+). Its pathway is cell wall biogenesis; peptidoglycan biosynthesis. Functionally, cell wall formation. This Coprothermobacter proteolyticus (strain ATCC 35245 / DSM 5265 / OCM 4 / BT) protein is D-alanine--D-alanine ligase.